A 626-amino-acid polypeptide reads, in one-letter code: tRNA uridine 5-carboxymethylaminomethyl modification enzyme MnmG (626 aa).

An FAD-binding site is contributed by 13-18; it reads GGGHAG. 273–287 serves as a coordination point for NAD(+); sequence GPRYCPSIEDKIHRF.

This sequence belongs to the MnmG family. Homodimer. Heterotetramer of two MnmE and two MnmG subunits. FAD serves as cofactor.

The protein resides in the cytoplasm. In terms of biological role, NAD-binding protein involved in the addition of a carboxymethylaminomethyl (cmnm) group at the wobble position (U34) of certain tRNAs, forming tRNA-cmnm(5)s(2)U34. This is tRNA uridine 5-carboxymethylaminomethyl modification enzyme MnmG from Acinetobacter baumannii (strain ACICU).